A 246-amino-acid chain; its full sequence is Isoprenyl transferase 1 (246 aa).

Residue Asp19 is part of the active site. Residue Asp19 coordinates Mg(2+). Substrate is bound by residues 20–23, Trp24, Arg32, His36, and 64–66; these read GNGR and STD. The active-site Proton acceptor is the Asn67. Residues Trp68, Arg70, Arg180, and 186–188 contribute to the substrate site; that span reads RLS. A Mg(2+)-binding site is contributed by Glu199.

The protein belongs to the UPP synthase family. Homodimer. Mg(2+) serves as cofactor.

Catalyzes the condensation of isopentenyl diphosphate (IPP) with allylic pyrophosphates generating different type of terpenoids. In Bradyrhizobium diazoefficiens (strain JCM 10833 / BCRC 13528 / IAM 13628 / NBRC 14792 / USDA 110), this protein is Isoprenyl transferase 1.